A 630-amino-acid chain; its full sequence is Adagio-like protein 3 (630 aa).

Residues 54 to 126 (EDEAAAWEGR…PLVDPMVVSE (73 aa)) form the PAS domain. Cys102 is subject to S-4a-FMN cysteine. The region spanning 220-268 (YCCILQLSDEVLAHNILSRLSPRDVASIGSVCTRMHELTKNDHLRKMVC) is the F-box domain. 5 Kelch repeats span residues 380–430 (SWLV…CTLD), 432–483 (SKLV…SVFG), 485–537 (TKLF…RLDH), 545–597 (GRII…CVVG), and 599–629 (TRVLVLGGHTGEEWILNELHELCLASRPDED).

This sequence belongs to the ADAGIO family. In terms of processing, FMN binds covalently to cysteine after exposure to blue light and is reversed in the dark.

It localises to the nucleus. The protein operates within protein modification; protein ubiquitination. Component of an E3 ubiquitin ligase complex that plays a central role in blue light-dependent circadian cycles. Acts as a blue light photoreceptor, due to the presence of FMN, that mediates light-regulated protein degradation of critical clock components by targeting them to the proteasome complex. The SCF(ADO3) E3 ubiquitin ligase complex is involved in the regulation of circadian clock-dependent processes including transition to flowering time, hypocotyl elongation, cotyledons and leaf movement rhythms. The protein is Adagio-like protein 3 of Oryza sativa subsp. japonica (Rice).